A 320-amino-acid chain; its full sequence is tRNA U34 carboxymethyltransferase (320 aa).

Residues K89, W103, K108, G128, 150–152 (DPT), 179–180 (IE), M194, Y198, and R313 each bind carboxy-S-adenosyl-L-methionine.

This sequence belongs to the class I-like SAM-binding methyltransferase superfamily. CmoB family. Homotetramer.

It catalyses the reaction carboxy-S-adenosyl-L-methionine + 5-hydroxyuridine(34) in tRNA = 5-carboxymethoxyuridine(34) in tRNA + S-adenosyl-L-homocysteine + H(+). Functionally, catalyzes carboxymethyl transfer from carboxy-S-adenosyl-L-methionine (Cx-SAM) to 5-hydroxyuridine (ho5U) to form 5-carboxymethoxyuridine (cmo5U) at position 34 in tRNAs. The chain is tRNA U34 carboxymethyltransferase from Glaesserella parasuis serovar 5 (strain SH0165) (Haemophilus parasuis).